Reading from the N-terminus, the 555-residue chain is Solute carrier family 22 member 2 (555 aa).

Over 1 to 21 (MSTVDDILEHIGEFHLFQKQT) the chain is Cytoplasmic. Residues 22–42 (FFLLALLSGAFTPIYVGIVFL) form a helical membrane-spanning segment. At 43 to 150 (GFTPDHHCWS…LVCAHSWMLD (108 aa)) the chain is on the extracellular side. The N-linked (GlcNAc...) asparagine glycan is linked to Asn71. The helical transmembrane segment at 151 to 171 (LFQSVVNVGFFIGAMMIGYLA) threads the bilayer. Residues 172 to 177 (DRFGRK) lie on the Cytoplasmic side of the membrane. The chain crosses the membrane as a helical span at residues 178–198 (FCLLVTILINAISGALMAISP). Residues 199 to 210 (NYAWMLVFRFLQ) are Extracellular-facing. Residues 211–231 (GLVSKAGWLIGYILITEFVGL) traverse the membrane as a helical segment. Residues 232–238 (GYRRMVG) are Cytoplasmic-facing. The helical transmembrane segment at 239-259 (ICYQIAFTVGLLILAGVAYVI) threads the bilayer. Over 260–263 (PNWR) the chain is Extracellular. A helical membrane pass occupies residues 264 to 284 (WLQFAVTLPNFCFLLYFWCIP). Positions 284 to 288 (PESPR) match the Proline-rich sequence motif. At 285–348 (ESPRWLISQN…VRTPQIRKHT (64 aa)) the chain is on the cytoplasmic side. A helical transmembrane segment spans residues 349–369 (LILMYNWFTSSVLYQGLIMHM). The Extracellular portion of the chain corresponds to 370–375 (GLAGDN). The chain crosses the membrane as a helical span at residues 376 to 396 (IYLDFFYSALVEFPAAFIIIL). Residues 397-404 (TIDRVGRR) lie on the Cytoplasmic side of the membrane. The chain crosses the membrane as a helical span at residues 405 to 425 (YPWAVSNMVAGAACLASVFIP). Over 426-432 (DDLQWLK) the chain is Extracellular. A helical membrane pass occupies residues 433-453 (ITIACLGRMGITMAYEMVCLV). At 454 to 464 (NAELYPTYIRN) the chain is on the cytoplasmic side. A helical transmembrane segment spans residues 465 to 485 (LGVLVCSSMCDIGGIITPFLV). Residues 486 to 494 (YRLTDIWME) are Extracellular-facing. Residues 495 to 515 (FPLVVFAVVGLVAGALVLLLP) form a helical membrane-spanning segment. Over 516–555 (ETKGKALPETIEDAENMQRPRKKKEKRIYLQVKQADRPLS) the chain is Cytoplasmic.

Belongs to the major facilitator (TC 2.A.1) superfamily. Organic cation transporter (TC 2.A.1.19) family. Tyrosine phosphorylated. In terms of tissue distribution, expressed in the kidney, in the proximal tubules of cortex and of the outer medulla. In brain, highly expressed predominantly in regions located at the brain-cerebrospinal fluid border, in the leptomeninges, in the choroid plexus and in a layer boarding the third ventricle. In brain, also observed in the granular cell layer of the cerebellum and in the granular layer and pyramidal cells of the hippocampus in the CA1-CA3 regions. Expressed in tracheal and bronchial ciliated epithelium in the respiratory tract. Expression is greater in the kidney of male than of female.

It localises to the basolateral cell membrane. The protein resides in the basal cell membrane. The protein localises to the apical cell membrane. It catalyses the reaction (R)-noradrenaline(out) = (R)-noradrenaline(in). The enzyme catalyses (R)-adrenaline(out) = (R)-adrenaline(in). The catalysed reaction is serotonin(out) = serotonin(in). It carries out the reaction dopamine(out) = dopamine(in). It catalyses the reaction histamine(out) = histamine(in). The enzyme catalyses thiamine(in) = thiamine(out). The catalysed reaction is creatinine(in) = creatinine(out). It carries out the reaction 1-methylnicotinamide(out) = 1-methylnicotinamide(in). It catalyses the reaction guanidine(out) = guanidine(in). The enzyme catalyses choline(out) = choline(in). The catalysed reaction is agmatine(out) = agmatine(in). It carries out the reaction putrescine(out) = putrescine(in). It catalyses the reaction spermidine(in) = spermidine(out). The enzyme catalyses tyramine(in) = tyramine(out). The catalysed reaction is L-histidyl-L-proline diketopiperazine(in) = L-histidyl-L-proline diketopiperazine(out). It carries out the reaction (R)-salsolinol(in) = (R)-salsolinol(out). It catalyses the reaction N-methyl-(R)-salsolinol(in) = N-methyl-(R)-salsolinol(out). The enzyme catalyses acetylcholine(in) = acetylcholine(out). The catalysed reaction is prostaglandin F2alpha(out) = prostaglandin F2alpha(in). It carries out the reaction prostaglandin E2(out) = prostaglandin E2(in). With respect to regulation, tyrosine phosphorylation of the transporter leads to activation of the transport activity. Inhibited by cGMP, most likely through a cGMP-binding protein that interacts with OCT2. Electrogenic voltage-dependent transporter that mediates the transport of a variety of organic cations such as endogenous bioactive amines, cationic drugs and xenobiotics. Functions as a Na(+)-independent, bidirectional uniporter. Cation cellular uptake or release is driven by the electrochemical potential, i.e. membrane potential and concentration gradient. However, may also engage electroneutral cation exchange when saturating concentrations of cation substrates are reached. Predominantly expressed at the basolateral membrane of hepatocytes and proximal tubules and involved in the uptake and disposition of cationic compounds by hepatic and renal clearance from the blood flow. Implicated in monoamine neurotransmitters uptake such as histamine, dopamine, adrenaline/epinephrine, noradrenaline/norepinephrine, serotonin and tyramine, thereby supporting a physiological role in the central nervous system by regulating interstitial concentrations of neurotransmitters. Also capable of transporting dopaminergic neuromodulators cyclo(his-pro), salsolinol and N-methyl-salsolinol, thereby involved in the maintenance of dopaminergic cell integrity in the central nervous system. Mediates the bidirectional transport of acetylcholine (ACh) at the apical membrane of ciliated cell in airway epithelium, thereby playing a role in luminal release of ACh from bronchial epithelium. Also transports guanidine and endogenous monoamines such as vitamin B1/thiamine, creatinine and N-1-methylnicotinamide (NMN). Mediates the uptake and efflux of quaternary ammonium compound choline. Mediates the bidirectional transport of polyamine agmatine and the uptake of polyamine putrescine. Able to transport non-amine endogenous compounds such as prostaglandin E2 (PGE2) and prostaglandin F2-alpha (PGF2-alpha). Also involved in the uptake of xenobiotic 4-(4-(dimethylamino)styryl)-N-methylpyridinium (ASP). May contribute to regulate the transport of organic compounds in testis across the blood-testis-barrier. The protein is Solute carrier family 22 member 2 of Rattus norvegicus (Rat).